Here is a 218-residue protein sequence, read N- to C-terminus: Glutathione S-transferase Mu 6 (218 aa).

The GST N-terminal domain maps to 1-88; sequence MPVTLGYWDI…YLGRKHNLCG (88 aa). Glutathione-binding positions include 7–8, 46–50, 59–60, and 72–73; these read YW, WLNDK, NL, and QS. The GST C-terminal domain maps to 90–208; sequence TEEERIRVDI…KTSRFLPSPV (119 aa). Tyr116 is a binding site for substrate.

It belongs to the GST superfamily. Mu family. As to quaternary structure, homodimer. As to expression, expressed in liver, stomach and small intestine. Not expressed in spleen, kidney, colon, heart, muscle, brain or lung.

Its subcellular location is the cytoplasm. The enzyme catalyses RX + glutathione = an S-substituted glutathione + a halide anion + H(+). Functionally, conjugation of reduced glutathione to a wide number of exogenous and endogenous hydrophobic electrophiles. The polypeptide is Glutathione S-transferase Mu 6 (Gstm6) (Mus musculus (Mouse)).